The sequence spans 169 residues: Probable inosine/xanthosine triphosphatase (169 aa).

Position 7–12 (7–12 (STNKAK)) interacts with substrate. A Mg(2+)-binding site is contributed by E35.

Belongs to the YjjX NTPase family. In terms of assembly, homodimer. Mg(2+) serves as cofactor. It depends on Mn(2+) as a cofactor.

It carries out the reaction XTP + H2O = XDP + phosphate + H(+). The catalysed reaction is ITP + H2O = IDP + phosphate + H(+). Its function is as follows. Phosphatase that hydrolyzes non-canonical purine nucleotides such as XTP and ITP to their respective diphosphate derivatives. Probably excludes non-canonical purines from DNA/RNA precursor pool, thus preventing their incorporation into DNA/RNA and avoiding chromosomal lesions. This is Probable inosine/xanthosine triphosphatase from Sulfurisphaera tokodaii (strain DSM 16993 / JCM 10545 / NBRC 100140 / 7) (Sulfolobus tokodaii).